We begin with the raw amino-acid sequence, 433 residues long: Xylose isomerase (433 aa).

The Mg(2+) site is built by Asp305 and Asp307.

This sequence belongs to the xylose isomerase family. In terms of assembly, homotetramer. The cofactor is Mg(2+).

It localises to the cytoplasm. The enzyme catalyses alpha-D-xylose = alpha-D-xylulofuranose. The chain is Xylose isomerase from Cereibacter sphaeroides (strain KD131 / KCTC 12085) (Rhodobacter sphaeroides).